Here is a 580-residue protein sequence, read N- to C-terminus: UPF0329 protein ECU06_0080 (580 aa).

Residues 308–330 (RQKRREREMEKSMKELLRDEEKA) are compositionally biased toward basic and acidic residues. A disordered region spans residues 308 to 384 (RQKRREREME…KTGKKSKGGR (77 aa)). The span at 331 to 340 (KSKKGRKKKS) shows a compositional bias: basic residues. A compositionally biased stretch (acidic residues) spans 351–363 (SETEEVEASEEME). Residues 372 to 384 (ARRKTGKKSKGGR) show a composition bias toward basic residues.

It belongs to the UPF0329 family.

This chain is UPF0329 protein ECU06_0080, found in Encephalitozoon cuniculi (strain GB-M1) (Microsporidian parasite).